Reading from the N-terminus, the 150-residue chain is Ribosomal RNA large subunit methyltransferase H (150 aa).

Residues Ala-100 and 118 to 123 (LSEMTF) each bind S-adenosyl-L-methionine.

Belongs to the RNA methyltransferase RlmH family. Homodimer.

The protein resides in the cytoplasm. The enzyme catalyses pseudouridine(1915) in 23S rRNA + S-adenosyl-L-methionine = N(3)-methylpseudouridine(1915) in 23S rRNA + S-adenosyl-L-homocysteine + H(+). Functionally, specifically methylates the pseudouridine at position 1915 (m3Psi1915) in 23S rRNA. This is Ribosomal RNA large subunit methyltransferase H from Helicobacter pylori (strain Shi470).